We begin with the raw amino-acid sequence, 261 residues long: MSIHASAIVHPSAQLAEGVEVGPYAIIEEHAIIGKGTSIGAHAVIGKWTELGENNQIYHMASVGAAPQDLKYKGEECWTRLGNGNVIREFATIHRGTVTGHAETVMGNNNLMMAYSHVAHDCTVGNGVVMANAATLAGHVTVQDNVILGGLVAIHQFVTIGAYAMLGGGTLVGMDIPPYMIATSGGKREAQLRGLNLIGLKRRGFSDEAISGLKKAYKTLFMAHLKQADAIAKIRSEIVGCAEVDTLLAFIEASQRGICRG.

The protein belongs to the transferase hexapeptide repeat family. LpxA subfamily. Homotrimer.

It localises to the cytoplasm. The catalysed reaction is a (3R)-hydroxyacyl-[ACP] + UDP-N-acetyl-alpha-D-glucosamine = a UDP-3-O-[(3R)-3-hydroxyacyl]-N-acetyl-alpha-D-glucosamine + holo-[ACP]. It participates in glycolipid biosynthesis; lipid IV(A) biosynthesis; lipid IV(A) from (3R)-3-hydroxytetradecanoyl-[acyl-carrier-protein] and UDP-N-acetyl-alpha-D-glucosamine: step 1/6. Functionally, involved in the biosynthesis of lipid A, a phosphorylated glycolipid that anchors the lipopolysaccharide to the outer membrane of the cell. This Trichlorobacter lovleyi (strain ATCC BAA-1151 / DSM 17278 / SZ) (Geobacter lovleyi) protein is Acyl-[acyl-carrier-protein]--UDP-N-acetylglucosamine O-acyltransferase.